The primary structure comprises 109 residues: MQTNTRKVVTSDAKWHPHLGISFIGCLLAITLEIYFEERIFIPHSGGVSFGLIVLLVINMVTIPVVMALIALLCFIIHIPRKSVNCILLCLLSCILTIAGLFIAYPVGR.

3 helical membrane passes run histidine 16–phenylalanine 36, leucine 52–leucine 72, and isoleucine 87–valine 107.

Its subcellular location is the cell membrane. This is an uncharacterized protein from Salmonella typhimurium (strain LT2 / SGSC1412 / ATCC 700720).